A 40-amino-acid polypeptide reads, in one-letter code: Unknown protein from spot 207 of 2D-PAGE of etiolated coleoptile (40 aa).

Belongs to the GST superfamily. HSP26 family.

In Zea mays (Maize), this protein is Unknown protein from spot 207 of 2D-PAGE of etiolated coleoptile.